The sequence spans 156 residues: Small ribosomal subunit protein uS7 (156 aa).

The protein belongs to the universal ribosomal protein uS7 family. In terms of assembly, part of the 30S ribosomal subunit. Contacts proteins S9 and S11.

Its function is as follows. One of the primary rRNA binding proteins, it binds directly to 16S rRNA where it nucleates assembly of the head domain of the 30S subunit. Is located at the subunit interface close to the decoding center, probably blocks exit of the E-site tRNA. The sequence is that of Small ribosomal subunit protein uS7 from Cronobacter sakazakii (strain ATCC BAA-894) (Enterobacter sakazakii).